The primary structure comprises 283 residues: Pantothenate synthetase (283 aa).

An ATP-binding site is contributed by 30–37; that stretch reads MGNLHQGH. His-37 acts as the Proton donor in catalysis. Gln-61 provides a ligand contact to (R)-pantoate. Gln-61 provides a ligand contact to beta-alanine. Residue 149 to 152 coordinates ATP; it reads GEKD. Gln-155 lines the (R)-pantoate pocket. ATP contacts are provided by residues Val-178 and 186–189; that span reads FSSR.

It belongs to the pantothenate synthetase family. Homodimer.

It localises to the cytoplasm. The catalysed reaction is (R)-pantoate + beta-alanine + ATP = (R)-pantothenate + AMP + diphosphate + H(+). It participates in cofactor biosynthesis; (R)-pantothenate biosynthesis; (R)-pantothenate from (R)-pantoate and beta-alanine: step 1/1. Its function is as follows. Catalyzes the condensation of pantoate with beta-alanine in an ATP-dependent reaction via a pantoyl-adenylate intermediate. This Proteus mirabilis (strain HI4320) protein is Pantothenate synthetase.